A 451-amino-acid chain; its full sequence is Cobyrinate a,c-diamide synthase (451 aa).

A GATase cobBQ-type domain is found at 246 to 437; sequence KIGVAYDEVF…VHTHVAAMPN (192 aa). The active-site Nucleophile is the C328.

This sequence belongs to the CobB/CbiA family. Requires Mg(2+) as cofactor.

The enzyme catalyses cob(II)yrinate + 2 L-glutamine + 2 ATP + 2 H2O = cob(II)yrinate a,c diamide + 2 L-glutamate + 2 ADP + 2 phosphate + 2 H(+). It carries out the reaction Ni-sirohydrochlorin + 2 L-glutamine + 2 ATP + 2 H2O = Ni-sirohydrochlorin a,c-diamide + 2 L-glutamate + 2 ADP + 2 phosphate + 2 H(+). Its pathway is cofactor biosynthesis; adenosylcobalamin biosynthesis; cob(II)yrinate a,c-diamide from sirohydrochlorin (anaerobic route): step 10/10. Its function is as follows. Catalyzes the ATP-dependent amidation of the two carboxylate groups at positions a and c of cobyrinate, using either L-glutamine or ammonia as the nitrogen source. Involved in the biosynthesis of the unique nickel-containing tetrapyrrole coenzyme F430, the prosthetic group of methyl-coenzyme M reductase (MCR), which plays a key role in methanogenesis and anaerobic methane oxidation. Catalyzes the ATP-dependent amidation of the two carboxylate groups at positions a and c of Ni-sirohydrochlorin, using L-glutamine or ammonia as the nitrogen source. In Methanobrevibacter smithii (strain ATCC 35061 / DSM 861 / OCM 144 / PS), this protein is Cobyrinate a,c-diamide synthase.